Reading from the N-terminus, the 190-residue chain is ATP synthase subunit delta (190 aa).

It belongs to the ATPase delta chain family. In terms of assembly, F-type ATPases have 2 components, F(1) - the catalytic core - and F(0) - the membrane proton channel. F(1) has five subunits: alpha(3), beta(3), gamma(1), delta(1), epsilon(1). F(0) has three main subunits: a(1), b(2) and c(10-14). The alpha and beta chains form an alternating ring which encloses part of the gamma chain. F(1) is attached to F(0) by a central stalk formed by the gamma and epsilon chains, while a peripheral stalk is formed by the delta and b chains.

The protein localises to the cell inner membrane. In terms of biological role, f(1)F(0) ATP synthase produces ATP from ADP in the presence of a proton or sodium gradient. F-type ATPases consist of two structural domains, F(1) containing the extramembraneous catalytic core and F(0) containing the membrane proton channel, linked together by a central stalk and a peripheral stalk. During catalysis, ATP synthesis in the catalytic domain of F(1) is coupled via a rotary mechanism of the central stalk subunits to proton translocation. Its function is as follows. This protein is part of the stalk that links CF(0) to CF(1). It either transmits conformational changes from CF(0) to CF(1) or is implicated in proton conduction. In Beijerinckia indica subsp. indica (strain ATCC 9039 / DSM 1715 / NCIMB 8712), this protein is ATP synthase subunit delta.